A 159-amino-acid polypeptide reads, in one-letter code: MAEQVVEILVSGGKATAGPPLGPAIGPLGVNIMQVVQKINDMTKDYDGMSVPVKVIVDTDKRTFEVEVGIPPASALVKKELGIATGAQEPKHQVAGNLTMEQVVKIAKMKQDAMLAYNLKNASKEVIGTCVSVGVNVEGMTPKEAQKAIDAGQFDSYFN.

Belongs to the universal ribosomal protein uL11 family. In terms of assembly, part of the ribosomal stalk of the 50S ribosomal subunit. Interacts with L10 and the large rRNA to form the base of the stalk. L10 forms an elongated spine to which L12 dimers bind in a sequential fashion forming a multimeric L10(L12)X complex.

In terms of biological role, forms part of the ribosomal stalk which helps the ribosome interact with GTP-bound translation factors. This Methanococcus maripaludis (strain C5 / ATCC BAA-1333) protein is Large ribosomal subunit protein uL11.